We begin with the raw amino-acid sequence, 430 residues long: Enolase (430 aa).

A (2R)-2-phosphoglycerate-binding site is contributed by glutamine 168. The active-site Proton donor is glutamate 210. Positions 247, 288, and 315 each coordinate Mg(2+). The (2R)-2-phosphoglycerate site is built by lysine 340, arginine 369, serine 370, and lysine 391. The active-site Proton acceptor is the lysine 340.

The protein belongs to the enolase family. It depends on Mg(2+) as a cofactor.

It localises to the cytoplasm. Its subcellular location is the secreted. It is found in the cell surface. The catalysed reaction is (2R)-2-phosphoglycerate = phosphoenolpyruvate + H2O. It participates in carbohydrate degradation; glycolysis; pyruvate from D-glyceraldehyde 3-phosphate: step 4/5. In terms of biological role, catalyzes the reversible conversion of 2-phosphoglycerate (2-PG) into phosphoenolpyruvate (PEP). It is essential for the degradation of carbohydrates via glycolysis. The sequence is that of Enolase from Rippkaea orientalis (strain PCC 8801 / RF-1) (Cyanothece sp. (strain PCC 8801)).